The primary structure comprises 216 residues: Deoxyribose-phosphate aldolase (216 aa).

D89 (proton donor/acceptor) is an active-site residue. The active-site Schiff-base intermediate with acetaldehyde is K153. Catalysis depends on K182, which acts as the Proton donor/acceptor.

It belongs to the DeoC/FbaB aldolase family. DeoC type 1 subfamily.

The protein localises to the cytoplasm. It carries out the reaction 2-deoxy-D-ribose 5-phosphate = D-glyceraldehyde 3-phosphate + acetaldehyde. It functions in the pathway carbohydrate degradation; 2-deoxy-D-ribose 1-phosphate degradation; D-glyceraldehyde 3-phosphate and acetaldehyde from 2-deoxy-alpha-D-ribose 1-phosphate: step 2/2. Functionally, catalyzes a reversible aldol reaction between acetaldehyde and D-glyceraldehyde 3-phosphate to generate 2-deoxy-D-ribose 5-phosphate. This chain is Deoxyribose-phosphate aldolase, found in Treponema denticola (strain ATCC 35405 / DSM 14222 / CIP 103919 / JCM 8153 / KCTC 15104).